The following is a 277-amino-acid chain: Large ribosomal subunit protein uL2 (277 aa).

Residues glycine 222–lysine 277 form a disordered region.

This sequence belongs to the universal ribosomal protein uL2 family. Part of the 50S ribosomal subunit. Forms a bridge to the 30S subunit in the 70S ribosome.

In terms of biological role, one of the primary rRNA binding proteins. Required for association of the 30S and 50S subunits to form the 70S ribosome, for tRNA binding and peptide bond formation. It has been suggested to have peptidyltransferase activity; this is somewhat controversial. Makes several contacts with the 16S rRNA in the 70S ribosome. The polypeptide is Large ribosomal subunit protein uL2 (Brucella abortus (strain S19)).